The primary structure comprises 288 residues: Diaminopimelate epimerase (288 aa).

N17, Q47, and N67 together coordinate substrate. The Proton donor role is filled by C76. Residues 77–78 (GN), N163, N196, and 214–215 (ER) contribute to the substrate site. The Proton acceptor role is filled by C223. 224-225 (GS) lines the substrate pocket.

This sequence belongs to the diaminopimelate epimerase family. As to quaternary structure, homodimer.

Its subcellular location is the cytoplasm. The catalysed reaction is (2S,6S)-2,6-diaminopimelate = meso-2,6-diaminopimelate. It functions in the pathway amino-acid biosynthesis; L-lysine biosynthesis via DAP pathway; DL-2,6-diaminopimelate from LL-2,6-diaminopimelate: step 1/1. Functionally, catalyzes the stereoinversion of LL-2,6-diaminopimelate (L,L-DAP) to meso-diaminopimelate (meso-DAP), a precursor of L-lysine and an essential component of the bacterial peptidoglycan. This Rhodopseudomonas palustris (strain BisB18) protein is Diaminopimelate epimerase.